Reading from the N-terminus, the 30-residue chain is Cysteine-rich venom protein annuliferin-a (30 aa).

Belongs to the CRISP family. Contains 8 disulfide bonds. As to expression, expressed by the venom gland.

The protein resides in the secreted. Its function is as follows. Inhibits calcium-activated potassium channels (KCa), voltage-gated potassium channel (Kv), and the calcium release channel/ryanodine receptor (RyR). The protein is Cysteine-rich venom protein annuliferin-a of Naja annulifera (Banded Egyptian cobra).